The following is a 277-amino-acid chain: Coiled-coil domain-containing protein 117 (277 aa).

The disordered stretch occupies residues 1–69 (MAALGRPFSG…GRVSIHCRKK (69 aa)). Over residues 26 to 37 (FAGRAFPPGAAG) the composition is skewed to low complexity. Omega-N-methylarginine is present on Arg-47. Position 52 is a phosphoserine (Ser-52). Positions 58-69 (ARGRVSIHCRKK) are enriched in basic residues. A coiled-coil region spans residues 139–166 (QCEVARRRLQEIEDRIIDEDEEVESDRN). The tract at residues 212-277 (LPELLPEKPK…ATSTEEEMEL (66 aa)) is disordered.

In terms of assembly, interacts with CIAO2B; the interaction is direct. Interacts with MMS19; the interaction is indirect.

It is found in the cytoplasm. Its subcellular location is the cytoskeleton. The protein resides in the spindle. It localises to the nucleus. In terms of biological role, facilitates DNA repair, cell cycle progression, and cell proliferation through its interaction with CIAO2B. The protein is Coiled-coil domain-containing protein 117 of Mus musculus (Mouse).